The following is an 831-amino-acid chain: Periplasmic nitrate reductase (831 aa).

Positions 1–29 form a signal peptide, tat-type signal; it reads MKFTRREFMKAQAAASAAAVAGIALPATA. The region spanning 41-97 is the 4Fe-4S Mo/W bis-MGD-type domain; it reads IKWEKAPCRFCGTGCSVLVGTQHGRVVATQGDPESPVNKGLNCVKGYFLSKIMYGKD. The [4Fe-4S] cluster site is built by Cys-48, Cys-51, Cys-55, and Cys-83. Residues Lys-85, Gln-152, Asn-177, Cys-181, 214–221, 245–249, 264–266, Met-374, Gln-378, Asn-484, 510–511, Lys-533, Asp-560, and 720–729 each bind Mo-bis(molybdopterin guanine dinucleotide); these read WGSNMAEM, STYTH, QSD, SD, and TGRVLEHWHS. Residue Trp-796 coordinates substrate. 2 residues coordinate Mo-bis(molybdopterin guanine dinucleotide): Asn-804 and Lys-821.

It belongs to the prokaryotic molybdopterin-containing oxidoreductase family. NasA/NapA/NarB subfamily. In terms of assembly, component of the periplasmic nitrate reductase NapAB complex composed of NapA and NapB. Requires [4Fe-4S] cluster as cofactor. It depends on Mo-bis(molybdopterin guanine dinucleotide) as a cofactor. Post-translationally, predicted to be exported by the Tat system. The position of the signal peptide cleavage has not been experimentally proven.

Its subcellular location is the periplasm. It carries out the reaction 2 Fe(II)-[cytochrome] + nitrate + 2 H(+) = 2 Fe(III)-[cytochrome] + nitrite + H2O. Catalytic subunit of the periplasmic nitrate reductase complex NapAB. Receives electrons from NapB and catalyzes the reduction of nitrate to nitrite. The chain is Periplasmic nitrate reductase from Psychromonas ingrahamii (strain DSM 17664 / CCUG 51855 / 37).